The following is a 234-amino-acid chain: Thiamine import ATP-binding protein ThiQ (234 aa).

In terms of domain architecture, ABC transporter spans 2–230 (LRFSDVKYRY…EKPPELTQYL (229 aa)). ATP is bound at residue 32–39 (GPSGAGKS).

It belongs to the ABC transporter superfamily. Thiamine importer (TC 3.A.1.19.1) family. The complex is composed of two ATP-binding proteins (ThiQ), two transmembrane proteins (ThiP) and a solute-binding protein (ThiB).

It localises to the cell inner membrane. It carries out the reaction thiamine(out) + ATP + H2O = thiamine(in) + ADP + phosphate + H(+). In terms of biological role, part of the ABC transporter complex ThiBPQ involved in thiamine import. Responsible for energy coupling to the transport system. The chain is Thiamine import ATP-binding protein ThiQ from Aliivibrio fischeri (strain ATCC 700601 / ES114) (Vibrio fischeri).